We begin with the raw amino-acid sequence, 236 residues long: MNVSVPLPSGGTMTEPDFSVLRQSMIAEIAAKTAFVSTQLGKAVLDPRVMNAMAKVPRHEFVLLELRPYAYADTPLPSCFDKTISQPFIVAVMTDLLELRPTDTVLEIGTGLGYQTAILAELAQHVYSIEIIEEMAVQARQRLARHGYTNVDIKIGNGCGGWPEHAPFDKVIVTAAPDLIPPPLIYQLKPGGKMVIPAGLPNDQQLILVEKDASDAVSTRDILPVRFSLLEDAEPG.

The active site involves serine 85.

The protein belongs to the methyltransferase superfamily. L-isoaspartyl/D-aspartyl protein methyltransferase family.

It localises to the cytoplasm. The enzyme catalyses [protein]-L-isoaspartate + S-adenosyl-L-methionine = [protein]-L-isoaspartate alpha-methyl ester + S-adenosyl-L-homocysteine. Catalyzes the methyl esterification of L-isoaspartyl residues in peptides and proteins that result from spontaneous decomposition of normal L-aspartyl and L-asparaginyl residues. It plays a role in the repair and/or degradation of damaged proteins. The polypeptide is Protein-L-isoaspartate O-methyltransferase 1 (Polaromonas sp. (strain JS666 / ATCC BAA-500)).